The sequence spans 214 residues: Single-pass membrane and coiled-coil domain-containing protein 1 (214 aa).

Residues 5-40 (TTTLISLKEAMKRVDNKLRALDTQFKELDVTKDNLT) are a coiled coil. A helical transmembrane segment spans residues 59–81 (IWTAALALGFTSMELNIVYSYVI). The segment at 193-214 (KQAQDPENSRAPLKELMPPVKD) is disordered.

Its subcellular location is the membrane. The polypeptide is Single-pass membrane and coiled-coil domain-containing protein 1 (Smco1) (Mus musculus (Mouse)).